The following is a 55-amino-acid chain: Histone H1 (55 aa).

Positions 1–15 (MAEVAPAPAAAAPAK) are enriched in low complexity. The tract at residues 1 to 28 (MAEVAPAPAAAAPAKAPKKKAAAKPKKA) is disordered. N-acetylalanine is present on Ala2. Basic residues predominate over residues 16–27 (APKKKAAAKPKK). The H15 domain maps to 28–55 (AGPSVGELIVKAVSASKERSGVSLAALK).

This sequence belongs to the histone H1/H5 family.

The protein resides in the nucleus. It is found in the chromosome. The protein localises to the secreted. Functionally, histones H1 are necessary for the condensation of nucleosome chains into higher-order structures. Its function is as follows. SAMP H1 has antibacterial activity against Gram-negative bacteria E.coli, A.salmonicida subsp salmonicida, V.anguillarum and S.typhimurium and Gram-positive bacteria B.subtilis and L.ivanovii. This Salmo salar (Atlantic salmon) protein is Histone H1.